The primary structure comprises 164 residues: MRLTSKGRYAVTAMLDVALHSQEGPVPLADISERQGISLSYLEQLFSRLRKNGLVSSVRGPGGGYLLGKDASEIVVAEVIFAVDESVDATRCQGREGCQGGDRCLTHALWRDLSDRITGFLSSISLEELVNNQEVLDVAGRQDNDKRRAPNGRAQETINVNLRP.

The 130-residue stretch at 2–131 (RLTSKGRYAV…SSISLEELVN (130 aa)) folds into the HTH rrf2-type domain. A DNA-binding region (H-T-H motif) is located at residues 28-51 (LADISERQGISLSYLEQLFSRLRK). [2Fe-2S] cluster-binding residues include Cys92, Cys98, and Cys104. The tract at residues 141–164 (RQDNDKRRAPNGRAQETINVNLRP) is disordered. Residues 154–164 (AQETINVNLRP) are compositionally biased toward polar residues.

It depends on [2Fe-2S] cluster as a cofactor.

Its function is as follows. Regulates the transcription of several operons and genes involved in the biogenesis of Fe-S clusters and Fe-S-containing proteins. The chain is HTH-type transcriptional regulator IscR from Photorhabdus laumondii subsp. laumondii (strain DSM 15139 / CIP 105565 / TT01) (Photorhabdus luminescens subsp. laumondii).